The chain runs to 134 residues: Profilin-2 (134 aa).

A disulfide bridge links Cys13 with Cys118. An Involved in PIP2 interaction motif is present at residues 84–100 (AVIRGKKGSGGITIKKT). Position 114 is a phosphothreonine (Thr114).

The protein belongs to the profilin family. As to quaternary structure, occurs in many kinds of cells as a complex with monomeric actin in a 1:1 ratio. Phosphorylated by MAP kinases.

The protein resides in the cytoplasm. It localises to the cytoskeleton. Its function is as follows. Binds to actin and affects the structure of the cytoskeleton. At high concentrations, profilin prevents the polymerization of actin, whereas it enhances it at low concentrations. This chain is Profilin-2, found in Olea europaea (Common olive).